A 347-amino-acid polypeptide reads, in one-letter code: UDP-N-acetylenolpyruvoylglucosamine reductase (347 aa).

The region spanning 33-221 (AGGSAERIYL…SGAWFALPRD (189 aa)) is the FAD-binding PCMH-type domain. The active site involves Arg-180. Ser-250 serves as the catalytic Proton donor. The active site involves Glu-320.

It belongs to the MurB family. FAD serves as cofactor.

It is found in the cytoplasm. The catalysed reaction is UDP-N-acetyl-alpha-D-muramate + NADP(+) = UDP-N-acetyl-3-O-(1-carboxyvinyl)-alpha-D-glucosamine + NADPH + H(+). The protein operates within cell wall biogenesis; peptidoglycan biosynthesis. Its function is as follows. Cell wall formation. The protein is UDP-N-acetylenolpyruvoylglucosamine reductase of Nitrosospira multiformis (strain ATCC 25196 / NCIMB 11849 / C 71).